An 829-amino-acid polypeptide reads, in one-letter code: Periplasmic nitrate reductase (829 aa).

Positions 1–29 (MKMTRRAFVKANAAASAAAVAGVTLPASA) form a signal peptide, tat-type signal. Residues 41 to 97 (IKWDKAPCRFCGTGCSVLVGTQNGRVVATQGDPEAPVNKGLNCIKGYFLSKIMYGKD) enclose the 4Fe-4S Mo/W bis-MGD-type domain. [4Fe-4S] cluster contacts are provided by C48, C51, C55, and C83. Residues K85, Q152, N177, C181, 214–221 (WGSNMAEM), 245–249 (STYYH), 264–266 (QSD), M374, Q378, N484, 510–511 (SD), K533, D560, and 718–727 (TGRVLEHWHT) contribute to the Mo-bis(molybdopterin guanine dinucleotide) site. F794 provides a ligand contact to substrate. Mo-bis(molybdopterin guanine dinucleotide) contacts are provided by N802 and K819.

The protein belongs to the prokaryotic molybdopterin-containing oxidoreductase family. NasA/NapA/NarB subfamily. In terms of assembly, component of the periplasmic nitrate reductase NapAB complex composed of NapA and NapB. It depends on [4Fe-4S] cluster as a cofactor. The cofactor is Mo-bis(molybdopterin guanine dinucleotide). Predicted to be exported by the Tat system. The position of the signal peptide cleavage has not been experimentally proven.

It is found in the periplasm. The catalysed reaction is 2 Fe(II)-[cytochrome] + nitrate + 2 H(+) = 2 Fe(III)-[cytochrome] + nitrite + H2O. In terms of biological role, catalytic subunit of the periplasmic nitrate reductase complex NapAB. Receives electrons from NapB and catalyzes the reduction of nitrate to nitrite. This chain is Periplasmic nitrate reductase, found in Aliivibrio fischeri (strain ATCC 700601 / ES114) (Vibrio fischeri).